A 122-amino-acid polypeptide reads, in one-letter code: Histone H2B subacrosomal variant (122 aa).

Over residues 1–25 the composition is skewed to basic residues; it reads MARNVTKRNKRCRGHQKAIYKKKSH. The segment at 1 to 30 is disordered; that stretch reads MARNVTKRNKRCRGHQKAIYKKKSHSSSES.

The protein belongs to the histone H2B family. Testis-specific. Restricted to the spermatid population of seminiferous epithelium. Not present in Sertoli cells, spermatogonia, spermatocytes or cells of the interstitial tissue (at protein level).

Its subcellular location is the cytoplasm. May act as an acrosome-nuclear docking protein in sperm. This Bos taurus (Bovine) protein is Histone H2B subacrosomal variant (SUBH2BV).